A 250-amino-acid chain; its full sequence is Carboxymethylproline synthase (250 aa).

60 to 64 (AGGDF) contributes to the malonyl-CoA binding site.

This sequence belongs to the enoyl-CoA hydratase/isomerase family. Homotrimer.

It catalyses the reaction (S)-1-pyrroline-5-carboxylate + malonyl-CoA + H2O + H(+) = (2S,5S)-5-carboxymethylproline + CO2 + CoA. The protein operates within antibiotic biosynthesis; carbapenem biosynthesis. Catalyzes the formation of (2S,5S)-carboxymethylproline (t-CMP) from malonyl-CoA and (S)-1-pyrroline-5-carboxylate, the first step in the biosynthesis of (5R)-carbapen-2-em-3-carboxylate, a beta-lactam antibiotic of the carbapenem class. Also catalyzes the independent decarboxylation of malonyl-CoA and methylmalonyl-CoA and the hydrolysis of CoA esters such as acetyl-CoA and propionyl-CoA. Catalyzes the reaction with a C2 epimeric mixture of methylmalonyl-CoA to give a 55:45 mixture of (6R)- and (6S)-epimers of 6-methyl-t-CMP, under standard incubation conditions. This is Carboxymethylproline synthase from Pectobacterium carotovorum subsp. carotovorum (Erwinia carotovora subsp. carotovora).